Consider the following 480-residue polypeptide: Proline--tRNA ligase (480 aa).

The protein belongs to the class-II aminoacyl-tRNA synthetase family. ProS type 3 subfamily. In terms of assembly, homodimer.

The protein localises to the cytoplasm. The enzyme catalyses tRNA(Pro) + L-proline + ATP = L-prolyl-tRNA(Pro) + AMP + diphosphate. In terms of biological role, catalyzes the attachment of proline to tRNA(Pro) in a two-step reaction: proline is first activated by ATP to form Pro-AMP and then transferred to the acceptor end of tRNA(Pro). This is Proline--tRNA ligase from Methanosarcina mazei (strain ATCC BAA-159 / DSM 3647 / Goe1 / Go1 / JCM 11833 / OCM 88) (Methanosarcina frisia).